Here is a 328-residue protein sequence, read N- to C-terminus: Integrator complex subunit 12 (328 aa).

The tract at residues 1–45 is sufficient for binding to IntS1 and IntS9 and for 3'-end snRNA processing; that stretch reads MAANIAAAAAAAQEVDPVLKKAIKLLHSSNPTSAAELRLLLDEAL. The PHD-type zinc-finger motif lies at 128 to 185; it reads DLNCCVCGEMVFTATNRLIECSKCGAMYHQECHKPPITKEEAADDQEQNWQCDTCCNK. Composition is skewed to low complexity over residues 215–233, 241–264, 274–283, and 292–311; these read KAKSSVASSRSSNSSNSSS, SSSTNASSSSSSKHGHKSSSSSSS, KSTAASSLSA, and SSGTSSRRSGSSTKSSSKSS. A disordered region spans residues 215–328; the sequence is KAKSSVASSR…GSSSKRRSKQ (114 aa).

It belongs to the Integrator subunit 12 family. As to quaternary structure, belongs to the multiprotein complex Integrator, at least composed of IntS1, IntS2, IntS3, IntS4, omd/IntS5, IntS6, defl/IntS7, IntS8, IntS9, IntS10, IntS11, IntS12, asun/IntS13, IntS14 and IntS15. The core complex associates with protein phosphatase 2A subunits mts/PP2A and Pp2A-29B, to form the Integrator-PP2A (INTAC) complex. Within the complex, interacts with IntS1 and IntS9. Interaction with IntS1 is likely to be important for promoting 3'-end processing of snRNAs.

Its subcellular location is the nucleus. Its function is as follows. Component of the integrator complex, a multiprotein complex that terminates RNA polymerase II (Pol II) transcription in the promoter-proximal region of genes. The integrator complex provides a quality checkpoint during transcription elongation by driving premature transcription termination of transcripts that are unfavorably configured for transcriptional elongation: the complex terminates transcription by (1) catalyzing dephosphorylation of the C-terminal domain (CTD) of Pol II subunit Polr2A/Rbp1 and Spt5, and (2) degrading the exiting nascent RNA transcript via endonuclease activity. The integrator complex is also involved in the 3'-end processing of the U7 snRNA, and also the spliceosomal snRNAs U1, U2, U4 and U5. Required for the normal expression of the Integrator complex component IntS1. The sequence is that of Integrator complex subunit 12 from Drosophila melanogaster (Fruit fly).